The sequence spans 386 residues: 2-isopropylmalate synthase (386 aa).

Positions 12-265 (VRIFDTTLRD…EVNIKTYKLY (254 aa)) constitute a Pyruvate carboxyltransferase domain. 4 residues coordinate a divalent metal cation: Asp-21, His-203, His-205, and Asn-239.

This sequence belongs to the alpha-IPM synthase/homocitrate synthase family. Homodimer. A divalent metal cation is required as a cofactor.

The enzyme catalyses 3-methyl-2-oxobutanoate + acetyl-CoA + H2O = (2S)-2-isopropylmalate + CoA + H(+). Its pathway is amino-acid biosynthesis; L-leucine biosynthesis; L-leucine from 3-methyl-2-oxobutanoate: step 1/4. Functionally, catalyzes the condensation of the acetyl group of acetyl-CoA with 3-methyl-2-oxobutanoate (2-oxoisovalerate) to form 3-carboxy-3-hydroxy-4-methylpentanoate (2-isopropylmalate). Carries out the first step of the leucine biosynthesis pathway. The protein is 2-isopropylmalate synthase (leuA) of Sulfurisphaera tokodaii (strain DSM 16993 / JCM 10545 / NBRC 100140 / 7) (Sulfolobus tokodaii).